Reading from the N-terminus, the 650-residue chain is Serine/threonine-protein kinase oca2 (650 aa).

The segment covering M1 to G14 has biased composition (polar residues). Disordered stretches follow at residues M1–I210 and H222–A288. Residue S72 is modified to Phosphoserine. The span at N78–E98 shows a compositional bias: basic and acidic residues. Polar residues predominate over residues P140–N154. Composition is skewed to basic residues over residues H222–H231 and H245–H257. Positions H258–P279 are enriched in basic and acidic residues. At S286 the chain carries Phosphoserine. One can recognise a Protein kinase domain in the interval G302 to I614. ATP contacts are provided by residues L308–V316 and K331. Residue D425 is the Proton acceptor of the active site. A disordered region spans residues P549–K570.

The protein belongs to the protein kinase superfamily. Ser/Thr protein kinase family.

Its subcellular location is the cytoplasm. The catalysed reaction is L-seryl-[protein] + ATP = O-phospho-L-seryl-[protein] + ADP + H(+). The enzyme catalyses L-threonyl-[protein] + ATP = O-phospho-L-threonyl-[protein] + ADP + H(+). In terms of biological role, overexpression causes cell cycle arrest. In Schizosaccharomyces pombe (strain 972 / ATCC 24843) (Fission yeast), this protein is Serine/threonine-protein kinase oca2.